The sequence spans 533 residues: MKLLAFRRLLRIQRVVIRYRLDDLILELPMLPWWLRLLGATLPWRWLPRRKLELTRGARLRLALQDLGPIFIKFGQILSTRRDLLPDDIANELAWLQDKVPPFPPELAVKRIEEQLGAKIEQVFARFEREPLASASVAQVHAARLKSGEEVVVKVIRPNLEPVIRSDIAWLFILARLAERVSSEARRLHPVEVVSDYEKTIVDELDLLREAANASQLRRNFEGSPLLYVPQVYWDWCRPKVLVMERIYGIPVTDLETLRDQRTDFKALAERGVEIFFTQVFRDSFFHADMHPGNIFVSTRAPWSPQYIAVDCGIVGSLTDEDQDYLARNLIAFFKRDYRKVAQLHIDSGWVPAETKVNDFEAAIRTVCEPIFEKPLKDISFGQVLLRLFQTARRFNMEIQPQLVLLQKTLLNIEGLGRQLYPELDLWATAQPFLERWMRERVSPKQLLRNFQQQVEQVPHLSQMARDTLERLSQPHAHNAPPPEWKGSRHDWLGRLVGAVLLVGAAEVGLGQQLEAWPAWVMLAGGVFLILRR.

A helical membrane pass occupies residues 24 to 44 (LILELPMLPWWLRLLGATLPW). The Protein kinase domain maps to 126–494 (RFEREPLASA…WKGSRHDWLG (369 aa)). Residues 132-140 (LASASVAQV) and Lys154 contribute to the ATP site. Asp289 acts as the Proton acceptor in catalysis. The chain crosses the membrane as a helical span at residues 510-530 (LGQQLEAWPAWVMLAGGVFLI).

Belongs to the ABC1 family. UbiB subfamily.

The protein resides in the cell inner membrane. Its pathway is cofactor biosynthesis; ubiquinone biosynthesis [regulation]. Is probably a protein kinase regulator of UbiI activity which is involved in aerobic coenzyme Q (ubiquinone) biosynthesis. In Pseudomonas aeruginosa (strain UCBPP-PA14), this protein is Probable protein kinase UbiB.